The sequence spans 764 residues: Thyrotropin receptor (764 aa).

An N-terminal signal peptide occupies residues 1–21; it reads MRPGSLLLLVLLLALSRSLRG. The Extracellular portion of the chain corresponds to 22–413; that stretch reads KECASPPCEC…EFNPCEDIMG (392 aa). The cysteines at positions 31 and 41 are disulfide-linked. Residues N77 and N99 are each glycosylated (N-linked (GlcNAc...) asparagine). LRR repeat units lie at residues 100–124, 125–150, 151–174, 176–199, 200–223, 225–248, and 264–288; these read LSKM…ALTE, LPLL…IYST, DIFF…AFQG, CNET…AFNG, TKLD…AFGG, YSGP…GLEH, and PLSL…AFKN. N-linked (GlcNAc...) asparagine glycosylation is found at N177 and N198. The N-linked (GlcNAc...) asparagine glycan is linked to N302. Y385 carries the sulfotyrosine modification. A helical membrane pass occupies residues 414–441; that stretch reads YRFLRIVVWFVSLLALLGNIFVLLILLT. Topologically, residues 442–450 are cytoplasmic; that stretch reads SHYKLTVPR. Residues 451–473 form a helical membrane-spanning segment; it reads FLMCNLAFADFCMGVYLLLIASV. Topologically, residues 474-494 are extracellular; it reads DLYTHSEYYNHAIDWQTGPGC. C494 and C569 form a disulfide bridge. Residues 495–517 form a helical membrane-spanning segment; that stretch reads NTAGFFTVFASELSVYTLTVITL. Over 518–537 the chain is Cytoplasmic; sequence ERWYAITFAMRLDRKIRLRH. Residues 538-560 form a helical membrane-spanning segment; that stretch reads AYTIMAGGWVSCFLLALLPMVGI. Over 561-580 the chain is Extracellular; the sequence is SSYAKVSICLPMDTDTPLAL. Residues 581-602 form a helical membrane-spanning segment; that stretch reads AYIVLVLLLNVVAFVVVCSCYV. Over 603 to 625 the chain is Cytoplasmic; the sequence is KIYITVRNPQYNPRDKDTKIAKR. Residues 626-649 traverse the membrane as a helical segment; it reads MAVLIFTDFMCMAPISFYALSALM. Residues 650-660 are Extracellular-facing; sequence NKPLITVTNSK. A helical transmembrane segment spans residues 661–682; sequence ILLVLFYPLNSCANPFLYAIFT. Residues 683 to 764 lie on the Cytoplasmic side of the membrane; it reads KAFQRDVFIL…ISEEYKQTAL (82 aa). The PDZ-binding motif lies at 762–764; the sequence is TAL.

Belongs to the G-protein coupled receptor 1 family. FSH/LSH/TSH subfamily. In terms of assembly, interacts with heterodimer GPHA2:GPHB5; this interaction stimulates cAMP production. Interacts (via the PDZ-binding motif) with SCRIB; regulates TSHR trafficking and function. In terms of processing, glycosylated. Post-translationally, sulfated. Sulfation on Tyr-385 plays a role in thyrotropin receptor binding and activation.

It is found in the cell membrane. The protein resides in the basolateral cell membrane. Functionally, receptor for the thyroid-stimulating hormone (TSH) or thyrotropin. Also acts as a receptor for the heterodimeric glycoprotein hormone (GPHA2:GPHB5) or thyrostimulin. The activity of this receptor is mediated by G proteins which activate adenylate cyclase. Plays a central role in controlling thyroid cell metabolism. The protein is Thyrotropin receptor (Tshr) of Mus musculus (Mouse).